We begin with the raw amino-acid sequence, 252 residues long: Centromere protein V (252 aa).

The interval 1–80 (MRRTRSAVAT…EEPPPAVTPA (80 aa)) is disordered. S18 bears the Phosphoserine mark. Residue R39 is modified to Omega-N-methylarginine. Over residues 54 to 64 (SAKPRPKPPPR) the composition is skewed to pro residues. Phosphothreonine is present on T78. The region spanning 125 to 237 (HTGGCHCGAV…TEEFNGSDWE (113 aa)) is the CENP-V/GFA domain. C129, C131, C149, C151, C154, C193, and C196 together coordinate Zn(2+). Residue S234 is modified to Phosphoserine.

The protein belongs to the Gfa family. Requires Zn(2+) as cofactor.

Its subcellular location is the chromosome. It localises to the centromere. The protein resides in the kinetochore. It is found in the nucleus. The protein localises to the cytoplasm. Its subcellular location is the cytoskeleton. It localises to the spindle. In terms of biological role, required for distribution of pericentromeric heterochromatin in interphase nuclei and for centromere formation and organization, chromosome alignment and cytokinesis. The sequence is that of Centromere protein V (Cenpv) from Mus musculus (Mouse).